The primary structure comprises 262 residues: Hydroxyethylthiazole kinase (262 aa).

Methionine 50 provides a ligand contact to substrate. The ATP site is built by arginine 125 and threonine 171. Residue glycine 198 participates in substrate binding.

It belongs to the Thz kinase family. It depends on Mg(2+) as a cofactor.

It carries out the reaction 5-(2-hydroxyethyl)-4-methylthiazole + ATP = 4-methyl-5-(2-phosphooxyethyl)-thiazole + ADP + H(+). It participates in cofactor biosynthesis; thiamine diphosphate biosynthesis; 4-methyl-5-(2-phosphoethyl)-thiazole from 5-(2-hydroxyethyl)-4-methylthiazole: step 1/1. Catalyzes the phosphorylation of the hydroxyl group of 4-methyl-5-beta-hydroxyethylthiazole (THZ). The sequence is that of Hydroxyethylthiazole kinase from Shigella boydii serotype 4 (strain Sb227).